The sequence spans 219 residues: Probable transaldolase (219 aa).

Lys-83 (schiff-base intermediate with substrate) is an active-site residue.

Belongs to the transaldolase family. Type 3B subfamily.

It is found in the cytoplasm. It carries out the reaction D-sedoheptulose 7-phosphate + D-glyceraldehyde 3-phosphate = D-erythrose 4-phosphate + beta-D-fructose 6-phosphate. The protein operates within carbohydrate degradation; pentose phosphate pathway; D-glyceraldehyde 3-phosphate and beta-D-fructose 6-phosphate from D-ribose 5-phosphate and D-xylulose 5-phosphate (non-oxidative stage): step 2/3. In terms of biological role, transaldolase is important for the balance of metabolites in the pentose-phosphate pathway. The protein is Probable transaldolase of Cereibacter sphaeroides (strain ATCC 17029 / ATH 2.4.9) (Rhodobacter sphaeroides).